The following is a 460-amino-acid chain: Tyrosine phenol-lyase (460 aa).

K260 is modified (N6-(pyridoxal phosphate)lysine).

Belongs to the beta-eliminating lyase family. Homotetramer. It depends on pyridoxal 5'-phosphate as a cofactor.

It catalyses the reaction L-tyrosine + H2O = phenol + pyruvate + NH4(+). The polypeptide is Tyrosine phenol-lyase (Fusobacterium nucleatum subsp. nucleatum (strain ATCC 25586 / DSM 15643 / BCRC 10681 / CIP 101130 / JCM 8532 / KCTC 2640 / LMG 13131 / VPI 4355)).